The following is a 290-amino-acid chain: 33 kDa chaperonin (290 aa).

2 cysteine pairs are disulfide-bonded: Cys-235/Cys-237 and Cys-268/Cys-271.

Belongs to the HSP33 family. Under oxidizing conditions two disulfide bonds are formed involving the reactive cysteines. Under reducing conditions zinc is bound to the reactive cysteines and the protein is inactive.

It is found in the cytoplasm. Functionally, redox regulated molecular chaperone. Protects both thermally unfolding and oxidatively damaged proteins from irreversible aggregation. Plays an important role in the bacterial defense system toward oxidative stress. The sequence is that of 33 kDa chaperonin from Streptococcus equi subsp. zooepidemicus (strain MGCS10565).